The primary structure comprises 308 residues: uncharacterized protein (308 aa).

Positions 19–43 (EPQASGAGPAQTPPPVTVPMTPPSK) are disordered. Residues 29 to 43 (QTPPPVTVPMTPPSK) show a composition bias toward pro residues.

This is an uncharacterized protein from Deinococcus radiodurans (strain ATCC 13939 / DSM 20539 / JCM 16871 / CCUG 27074 / LMG 4051 / NBRC 15346 / NCIMB 9279 / VKM B-1422 / R1).